We begin with the raw amino-acid sequence, 634 residues long: 1-deoxy-D-xylulose-5-phosphate synthase (634 aa).

Thiamine diphosphate-binding positions include His74 and Ala115–Ser117. Asp146 provides a ligand contact to Mg(2+). Residues Gly147–Ala148, Asn176, Tyr283, and Glu365 contribute to the thiamine diphosphate site. Residue Asn176 coordinates Mg(2+).

The protein belongs to the transketolase family. DXPS subfamily. Homodimer. Mg(2+) serves as cofactor. Requires thiamine diphosphate as cofactor.

The catalysed reaction is D-glyceraldehyde 3-phosphate + pyruvate + H(+) = 1-deoxy-D-xylulose 5-phosphate + CO2. It functions in the pathway metabolic intermediate biosynthesis; 1-deoxy-D-xylulose 5-phosphate biosynthesis; 1-deoxy-D-xylulose 5-phosphate from D-glyceraldehyde 3-phosphate and pyruvate: step 1/1. Functionally, catalyzes the acyloin condensation reaction between C atoms 2 and 3 of pyruvate and glyceraldehyde 3-phosphate to yield 1-deoxy-D-xylulose-5-phosphate (DXP). This is 1-deoxy-D-xylulose-5-phosphate synthase from Burkholderia pseudomallei (strain 668).